We begin with the raw amino-acid sequence, 263 residues long: GTP cyclohydrolase 1 type 2 homolog (263 aa).

Residues histidine 76, histidine 77, aspartate 113, histidine 231, and glutamate 235 each coordinate a divalent metal cation.

Belongs to the GTP cyclohydrolase I type 2/NIF3 family. As to quaternary structure, homohexamer.

The polypeptide is GTP cyclohydrolase 1 type 2 homolog (Deinococcus radiodurans (strain ATCC 13939 / DSM 20539 / JCM 16871 / CCUG 27074 / LMG 4051 / NBRC 15346 / NCIMB 9279 / VKM B-1422 / R1)).